A 200-amino-acid polypeptide reads, in one-letter code: Holliday junction resolvase RecU (200 aa).

Residues 1–24 are disordered; that stretch reads MTIRYPNGKRYDQASQPHKTPIKK. The Mg(2+) site is built by Thr85, Asp87, Glu100, and Gln119.

The protein belongs to the RecU family. Mg(2+) is required as a cofactor.

It localises to the cytoplasm. It catalyses the reaction Endonucleolytic cleavage at a junction such as a reciprocal single-stranded crossover between two homologous DNA duplexes (Holliday junction).. Functionally, endonuclease that resolves Holliday junction intermediates in genetic recombination. Cleaves mobile four-strand junctions by introducing symmetrical nicks in paired strands. Promotes annealing of linear ssDNA with homologous dsDNA. Required for DNA repair, homologous recombination and chromosome segregation. This Bacillus mycoides (strain KBAB4) (Bacillus weihenstephanensis) protein is Holliday junction resolvase RecU.